Consider the following 121-residue polypeptide: Small ribosomal subunit protein uS13 (121 aa).

Residues 91-121 (HRRGLPTRGQNTKNNARTRKGPVKTVANKKK) are disordered. The segment covering 106–121 (ARTRKGPVKTVANKKK) has biased composition (basic residues).

The protein belongs to the universal ribosomal protein uS13 family. As to quaternary structure, part of the 30S ribosomal subunit. Forms a loose heterodimer with protein S19. Forms two bridges to the 50S subunit in the 70S ribosome.

In terms of biological role, located at the top of the head of the 30S subunit, it contacts several helices of the 16S rRNA. In the 70S ribosome it contacts the 23S rRNA (bridge B1a) and protein L5 of the 50S subunit (bridge B1b), connecting the 2 subunits; these bridges are implicated in subunit movement. Contacts the tRNAs in the A and P-sites. The protein is Small ribosomal subunit protein uS13 of Macrococcus caseolyticus (strain JCSC5402) (Macrococcoides caseolyticum).